The following is a 385-amino-acid chain: MAMKLNALMTLQCPKRNMFTRIAPPQAGRVRSKVSMASTLHASPLVFDKLKAGRPEVDELFNSLEGWARDNILVHLKSVENSWQPQDYLPDPTSDAFEDQVKEMRERAKDIPDEYFVVLVGDMITEEALPTYMSMLNRCDGIKDDTGAQPTSWATWTRAWTAEENRHGDLLNKYLYLSGRVDMRMIEKTIQYLIGSGMDTKTENCPYMGFIYTSFQERATFISHANTAKLAQHYGDKNLAQVCGNIASDEKRHATAYTKIVEKLAEIDPDTTVIAFSDMMRKKIQMPAHAMYDGSDDMLFKHFTAVAQQIGVYSAWDYCDIIDFLVDKWNVAKMTGLSGEGRKAQEYVCSLAAKIRRVEEKVQGKEKKAVLPVAFSWIFNRQIII.

The N-terminal 36 residues, 1-36 (MAMKLNALMTLQCPKRNMFTRIAPPQAGRVRSKVSM), are a transit peptide targeting the chloroplast. Fe cation-binding residues include E126, E164, H167, E217, E250, and H253.

It belongs to the fatty acid desaturase type 2 family. In terms of assembly, homodimer. Requires Fe(2+) as cofactor. As to expression, found only in tissues which synthesize petroselinic acid, such as developing seeds.

It localises to the plastid. The protein resides in the chloroplast. The enzyme catalyses hexadecanoyl-[ACP] + 2 reduced [2Fe-2S]-[ferredoxin] + O2 + 2 H(+) = (4Z)-hexadecenoyl-[ACP] + 2 oxidized [2Fe-2S]-[ferredoxin] + 2 H2O. Its function is as follows. Converts palmitoyl-ACP to (4Z)-hexadec-4-enoyl-ACP by introduction of a cis double bond between carbons 4 and 5 of the acyl chain. This chain is Palmitoyl-[acyl-carrier-protein] 4-desaturase, chloroplastic, found in Coriandrum sativum (Coriander).